Consider the following 346-residue polypeptide: MPQDVLLGKSLPELTDWIETTGQPAYRGKQLYNWLYQKGIHDLSEITVFPKAWREQMGTYPVGRSQIHHQRTAPDGTRKYLLQLHDGLIIETVGIPTEKRLTVCVSSQVGCAMACDFCATGKSGFTRHLQAHEIIDQVLTVQTDFQQRVSHVVFMGMGEPLANLEQVLKSIQSLNQDIGIGQRSLTVSTVGVPDQIRALAQQNLQITLAVSLHAPNQALRESIIPTAVHYPIEALLDECREYVAITRRRLSFEYILLAGVNDLPDHAAELAKKLKGFQSHVNLIPYNPITEVPFQRPGKKRINVFKQILQDHKIAVSVRYSKGLEADAACGQLRSNLRRSAPATVK.

Glu-91 functions as the Proton acceptor in the catalytic mechanism. Residues 97-325 (TEKRLTVCVS…VSVRYSKGLE (229 aa)) form the Radical SAM core domain. Cys-104 and Cys-330 are oxidised to a cystine. Cys-111, Cys-115, and Cys-118 together coordinate [4Fe-4S] cluster. S-adenosyl-L-methionine-binding positions include 158-159 (GE), Ser-188, 211-213 (SLH), and Asn-287. The active-site S-methylcysteine intermediate is the Cys-330.

This sequence belongs to the radical SAM superfamily. RlmN family. It depends on [4Fe-4S] cluster as a cofactor.

It localises to the cytoplasm. It carries out the reaction adenosine(2503) in 23S rRNA + 2 reduced [2Fe-2S]-[ferredoxin] + 2 S-adenosyl-L-methionine = 2-methyladenosine(2503) in 23S rRNA + 5'-deoxyadenosine + L-methionine + 2 oxidized [2Fe-2S]-[ferredoxin] + S-adenosyl-L-homocysteine. The enzyme catalyses adenosine(37) in tRNA + 2 reduced [2Fe-2S]-[ferredoxin] + 2 S-adenosyl-L-methionine = 2-methyladenosine(37) in tRNA + 5'-deoxyadenosine + L-methionine + 2 oxidized [2Fe-2S]-[ferredoxin] + S-adenosyl-L-homocysteine. Its function is as follows. Specifically methylates position 2 of adenine 2503 in 23S rRNA and position 2 of adenine 37 in tRNAs. The chain is Probable dual-specificity RNA methyltransferase RlmN from Picosynechococcus sp. (strain ATCC 27264 / PCC 7002 / PR-6) (Agmenellum quadruplicatum).